Consider the following 386-residue polypeptide: Prostatic acid phosphatase (386 aa).

The first 32 residues, 1 to 32 (MRAAPLLLARAASLSLGFLFLLFFWLDRSVLA), serve as a signal peptide directing secretion. Residue Arg-43 coordinates substrate. His-44 serves as the catalytic Nucleophile. A substrate-binding site is contributed by Arg-47. The N-linked (GlcNAc...) asparagine glycan is linked to Asn-94. Arg-111 contributes to the substrate binding site. 3 cysteine pairs are disulfide-bonded: Cys-161/Cys-372, Cys-215/Cys-313, and Cys-347/Cys-351. Asn-220 carries N-linked (GlcNAc...) asparagine glycosylation. His-289 contacts substrate. The active-site Proton donor is Asp-290. Asn-333 carries N-linked (GlcNAc...) asparagine glycosylation.

Belongs to the histidine acid phosphatase family. In terms of assembly, homodimer; dimer formation is required for phosphatase activity. N-glycosylated. High mannose content, partially sialylated and fucosylated biantennary complex. Also fucosylated with partially sialylated triantennary complex oligosaccharides. Post-translationally, proteolytically cleaved in seminal fluid to produce several peptides. Peptide PAPf39, the most prominent, forms amyloid beta-sheet fibrils, SEVI (semen-derived enhancer of viral infection). In terms of tissue distribution, highly expressed in the prostate, restricted to glandular and ductal epithelial cells. Also expressed in bladder, kidney, pancreas, lung, cervix, testis and ovary. Weak expression in a subset of pancreatic islet cells, squamous epithelia, the pilosebaceous unit, colonic neuroendocrine cells and skin adnexal structures. Low expression in prostate carcinoma cells and tissues. As to expression, widely expressed. Expressed in the sarcolemma of skeletal muscle.

Its subcellular location is the secreted. The protein resides in the cell membrane. It is found in the lysosome membrane. It localises to the nucleus. The protein localises to the cytoplasm. Its subcellular location is the cytosol. The catalysed reaction is a phosphate monoester + H2O = an alcohol + phosphate. The enzyme catalyses 1-(9Z-octadecenoyl)-sn-glycero-3-phosphate + H2O = 1-(9Z-octadecenoyl)-sn-glycerol + phosphate. It catalyses the reaction a ribonucleoside 5'-phosphate + H2O = a ribonucleoside + phosphate. It carries out the reaction O-phospho-L-tyrosyl-[protein] + H2O = L-tyrosyl-[protein] + phosphate. Its activity is regulated as follows. Phosphatase activity inhibited by L(+)-tartrate, and by its derivative, alpha-benzylaminobenzylphosphonic acid. In terms of biological role, a non-specific tyrosine phosphatase that dephosphorylates a diverse number of substrates under acidic conditions (pH 4-6) including alkyl, aryl, and acyl orthophosphate monoesters and phosphorylated proteins. Has lipid phosphatase activity and inactivates lysophosphatidic acid in seminal plasma. Tyrosine phosphatase that acts as a tumor suppressor of prostate cancer through dephosphorylation of ERBB2 and deactivation of MAPK-mediated signaling. In addition to its tyrosine phosphatase activity has ecto-5'-nucleotidase activity in dorsal root ganglion (DRG) neurons. Generates adenosine from AMP which acts as a pain suppressor. Its function is as follows. (Microbial infection) Forms amyloid beta-sheet fibrils in semen. These fibrils, termed SEVI (semen-derived enhancer of viral infection) capture HIV virions, attach them to target cells and enhance infection. SEVI amyloid fibrils are degraded by polyphenol epigallocatechin-3-gallate (EGCG), a constituent of green tea. Target cell attachment and enhancement of HIV infection is inhibited by surfen. Also similarly boosts XMRV (xenotropic murine leukemia virus-related virus) infection. The chain is Prostatic acid phosphatase from Homo sapiens (Human).